The chain runs to 440 residues: Xylose isomerase (440 aa).

Mg(2+) contacts are provided by aspartate 307 and aspartate 309.

The protein belongs to the xylose isomerase family. In terms of assembly, homotetramer. It depends on Mg(2+) as a cofactor.

It localises to the cytoplasm. It catalyses the reaction alpha-D-xylose = alpha-D-xylulofuranose. The chain is Xylose isomerase from Pectobacterium carotovorum subsp. carotovorum (strain PC1).